The chain runs to 266 residues: Undecaprenyl-diphosphatase (266 aa).

Transmembrane regions (helical) follow at residues 8–28, 39–59, 87–107, 113–133, 188–208, 219–239, and 246–266; these read VLAL…AHLI, QGLA…VIYF, WAVG…HDII, SAQV…FADV, SFLL…LGLV, MIVL…HYFL, and TMLP…FLFW.

This sequence belongs to the UppP family.

The protein localises to the cell inner membrane. It catalyses the reaction di-trans,octa-cis-undecaprenyl diphosphate + H2O = di-trans,octa-cis-undecaprenyl phosphate + phosphate + H(+). In terms of biological role, catalyzes the dephosphorylation of undecaprenyl diphosphate (UPP). Confers resistance to bacitracin. This chain is Undecaprenyl-diphosphatase, found in Thioalkalivibrio sulfidiphilus (strain HL-EbGR7).